The chain runs to 135 residues: Large ribosomal subunit protein mL41 (135 aa).

Residues 1–13 (MGVLSALARGFVR) constitute a mitochondrion transit peptide.

The protein belongs to the mitochondrion-specific ribosomal protein mL41 family. In terms of assembly, component of the mitochondrial ribosome large subunit (39S) which comprises a 16S rRNA and about 50 distinct proteins.

The protein localises to the mitochondrion. Its function is as follows. Component of the mitochondrial ribosome large subunit. Also involved in apoptosis and cell cycle. The protein is Large ribosomal subunit protein mL41 (mrpl41) of Danio rerio (Zebrafish).